The following is a 265-amino-acid chain: MFKWPWKADDESGNAEMPWEQALAIPVLAHLSPTEQRKLTQLAARFLQQKRLVALQGLELTPLHQARIALLFCLPVLELGIEWLDGFHEVLIYPAPFVVDDEWEDDIGLVHNQRVVQSGQSWQQGPVVLNWLDIQDSFDASGFNLVVHEVAHKLDARNGDRASGVPLIPLREVAGWEHDLHAAMNNIQDEIDMVGESAASIDAYAATDPAECFAVLSEYFFSAPELFAPRFPALWQRFCHFYQQDPLQRIRENGLQDEDNRRIVH.

Residues His111, His148, His152, and Glu211 each contribute to the Zn(2+) site.

The protein belongs to the MtfA family. In terms of assembly, interacts with Mlc. Zn(2+) is required as a cofactor.

It is found in the cytoplasm. Involved in the modulation of the activity of the glucose-phosphotransferase system (glucose-PTS). Interacts with the transcriptional repressor Mlc, preventing its interaction with DNA and leading to the modulation of expression of genes regulated by Mlc, including ptsG, which encodes the PTS system glucose-specific EIICB component. Its function is as follows. Shows zinc-dependent metallopeptidase activity. This chain is Mlc titration factor A, found in Klebsiella pneumoniae (strain 342).